Reading from the N-terminus, the 347-residue chain is 4-hydroxy-2-oxovalerate aldolase (347 aa).

Residues 2–252 (ILISDATLRD…DTRTTFEHVM (251 aa)) enclose the Pyruvate carboxyltransferase domain. A substrate-binding site is contributed by 10 to 11 (RD). Aspartate 11 provides a ligand contact to Mn(2+). The active-site Proton acceptor is the histidine 14. Positions 164 and 191 each coordinate substrate. Positions 191 and 193 each coordinate Mn(2+).

The protein belongs to the 4-hydroxy-2-oxovalerate aldolase family.

The enzyme catalyses (S)-4-hydroxy-2-oxopentanoate = acetaldehyde + pyruvate. This Burkholderia thailandensis (strain ATCC 700388 / DSM 13276 / CCUG 48851 / CIP 106301 / E264) protein is 4-hydroxy-2-oxovalerate aldolase (mhpE).